Reading from the N-terminus, the 276-residue chain is MTAVSTTATTVLQATQSDVLQEIQSNFLLNSSIWVNIALAGVVILLFVAMGRDLESPRAKLIWVATMLVPLVSISSYAGLASGLTVGFLQMPPGHALAGQEVLSPWGRYLTWTFSTPMILLALGLLADTDIASLFTAITMDIGMCVTGLAAALITSSHLLRWVFYGISCAFFVAVLYVLLVQWPADAEAAGTSEIFGTLKILTVVLWLGYPILWALGSEGVALLSVGVTSWGYSGLDILAKYVFAFLLLRWVAANEGTVSGSGMGIGSGGAAPADD.

Positions 1–21 are excised as a propeptide; the sequence is MTAVSTTATTVLQATQSDVLQ. The Extracellular portion of the chain corresponds to 22-25; it reads EIQS. A helical membrane pass occupies residues 26–51; sequence NFLLNSSIWVNIALAGVVILLFVAMG. The Cytoplasmic portion of the chain corresponds to 52–57; sequence RDLESP. Residues 58-81 form a helical membrane-spanning segment; the sequence is RAKLIWVATMLVPLVSISSYAGLA. Over 82-105 the chain is Extracellular; it reads SGLTVGFLQMPPGHALAGQEVLSP. Residues 106–127 form a helical membrane-spanning segment; that stretch reads WGRYLTWTFSTPMILLALGLLA. Topologically, residues 128-130 are cytoplasmic; that stretch reads DTD. A helical membrane pass occupies residues 131 to 154; that stretch reads IASLFTAITMDIGMCVTGLAAALI. The Extracellular segment spans residues 155 to 157; that stretch reads TSS. The chain crosses the membrane as a helical span at residues 158–180; sequence HLLRWVFYGISCAFFVAVLYVLL. At 181–192 the chain is on the cytoplasmic side; it reads VQWPADAEAAGT. The chain crosses the membrane as a helical span at residues 193–216; it reads SEIFGTLKILTVVLWLGYPILWAL. Residues 217 to 225 are Extracellular-facing; it reads GSEGVALLS. Residues 226–254 form a helical membrane-spanning segment; the sequence is VGVTSWGYSGLDILAKYVFAFLLLRWVAA. Lys241 carries the N6-(retinylidene)lysine modification. The Cytoplasmic portion of the chain corresponds to 255-276; sequence NEGTVSGSGMGIGSGGAAPADD.

This sequence belongs to the archaeal/bacterial/fungal opsin family.

It is found in the cell membrane. Its function is as follows. Light-driven anion pump. The sequence is that of Halorhodopsin from Halobacterium halobium (strain shark).